A 1727-amino-acid chain; its full sequence is Gag-Pol polyprotein (1727 aa).

Residue Gly-2 is the site of N-myristoyl glycine; by host attachment. A PTAP/PSAP motif motif is present at residues 109 to 112; that stretch reads STLL. The LYPX(n)L motif signature appears at 128–132; it reads VLPDE. Disordered regions lie at residues 137–221, 302–322, 443–471, and 515–547; these read LLFQ…PSTW, KNVPGPGGLPTQLPNEIDEGF, KRETPEEREARLIKEQEEREDRRDRKRDK, and DCPKRPRDQKKPAPVLTLGEDSEQGCQGSGAPP. Residues 143–165 show a composition bias toward pro residues; the sequence is LPHPPHNPLLEPPPYNSPSPPVL. The short motif at 154–157 is the PPXY motif element; it reads PPPY. Low complexity predominate over residues 166 to 187; the sequence is SPVSPTTPSAPTPSSLVSSSTP. The span at 188 to 204 shows a compositional bias: pro residues; sequence PSSPAPPELTPRTPPQT. Basic and acidic residues-rich tracts occupy residues 443 to 465 and 515 to 525; these read KRETPEEREARLIKEQEEREDRR and DCPKRPRDQKK. The segment at 501–518 adopts a CCHC-type zinc-finger fold; the sequence is DQCAYCKERGHWIKDCPK. In terms of domain architecture, Peptidase A2 spans 560–630; the sequence is TTFLVDTGAQ…CPYPLLGRDL (71 aa). Catalysis depends on Asp-565, which acts as the Protease; shared with dimeric partner. A Reverse transcriptase domain is found at 736–929; the sequence is KFLELGVLRP…TKVTYLGYIL (194 aa). Positions 806, 880, 881, 1181, 1219, 1240, and 1310 each coordinate Mg(2+). One can recognise an RNase H type-1 domain in the interval 1172–1318; that stretch reads PDADHTWYTD…ADRVARQAAM (147 aa). The HHCC-type zinc finger occupies 1383-1421; the sequence is HAWTHLGNRKLKLLIEKTDFLIPRASTLIEQVTSACKVC. An Integrase catalytic domain is found at 1438-1596; it reads RGNRPGVYWE…TPYEILYGGP (159 aa). Mg(2+) contacts are provided by Asp-1449 and Asp-1508.

This sequence belongs to the retroviral Pol polyprotein family. Homohexamer; further associates as homomultimer. The virus core is composed of a lattice formed from hexagonal rings, each containing six capsid monomers. In terms of assembly, interacts (via PPXY motif) with host NEDD4. Interacts (via PSAP motif) with host TSG101. Interacts (via LYPX(n)L motif) with host PDCD6IP. As to quaternary structure, the reverse transcriptase is a monomer (Potential). Interacts (via RNase domains) with host release factor ETF1; this interaction is essential for translational readthrough of amber codon between viral gag and pol genes, as well as for viral replication. Homodimer. Mg(2+) is required as a cofactor. Post-translationally, specific enzymatic cleavages by the viral protease yield mature proteins. The protease is released by autocatalytic cleavage. The polyprotein is cleaved during and after budding, this process is termed maturation. Phosphorylated on serine residues.

The protein resides in the virion. It is found in the host cell membrane. The protein localises to the host late endosome membrane. It localises to the host endosome. Its subcellular location is the host multivesicular body. The protein resides in the host cytoplasm. The enzyme catalyses DNA(n) + a 2'-deoxyribonucleoside 5'-triphosphate = DNA(n+1) + diphosphate. The catalysed reaction is Endonucleolytic cleavage to 5'-phosphomonoester.. With respect to regulation, most efficiently inhibited by Amprenavir, which is able to block Gag-Pol processing in infected cells. Its function is as follows. Plays a role in budding and is processed by the viral protease during virion maturation outside the cell. During budding, it recruits, in a PPXY-dependent or independent manner, Nedd4-like ubiquitin ligases that conjugate ubiquitin molecules to Gag-Pol, or to Gag-Pol binding host factors. Interaction with HECT ubiquitin ligases probably links the viral protein to the host ESCRT pathway and facilitates release. Functionally, targets Gag and gag-pol polyproteins to the plasma membrane via a multipartite membrane binding signal, that includes its myristoylated N-terminus. Also mediates nuclear localization of the pre-integration complex. In terms of biological role, constituent of the pre-integration complex (PIC) which tethers the latter to mitotic chromosomes. This allows the integration of the viral genome into the host DNA. Forms the spherical core of the virion that encapsulates the genomic RNA-nucleocapsid complex. Its function is as follows. Involved in the packaging and encapsidation of two copies of the genome. Binds with high affinity to conserved UCUG elements within the packaging signal, located near the 5'-end of the genome. This binding is dependent on genome dimerization. Acts as a nucleic acid chaperone which is involved in rearrangement of nucleic acid secondary structures during gRNA retrotranscription. Functionally, the aspartyl protease mediates proteolytic cleavages of Gag and Gag-Pol polyproteins during or shortly after the release of the virion from the plasma membrane. Cleavages take place as an ordered, step-wise cascade to yield mature proteins. This process is called maturation. Displays maximal activity during the budding process just prior to particle release from the cell. In terms of biological role, RT is a multifunctional enzyme that converts the viral dimeric RNA genome into dsDNA in the cytoplasm, shortly after virus entry into the cell. This enzyme displays a DNA polymerase activity that can copy either DNA or RNA templates, and a ribonuclease H (RNase H) activity that cleaves the RNA strand of RNA-DNA heteroduplexes in a partially processive 3' to 5' endonucleasic mode. Conversion of viral genomic RNA into dsDNA requires many steps. A tRNA binds to the primer-binding site (PBS) situated at the 5' end of the viral RNA. RT uses the 3' end of the tRNA primer to perform a short round of RNA-dependent minus-strand DNA synthesis. The reading proceeds through the U5 region and ends after the repeated (R) region which is present at both ends of viral RNA. The portion of the RNA-DNA heteroduplex is digested by the RNase H, resulting in a ssDNA product attached to the tRNA primer. This ssDNA/tRNA hybridizes with the identical R region situated at the 3' end of viral RNA. This template exchange, known as minus-strand DNA strong stop transfer, can be either intra- or intermolecular. RT uses the 3' end of this newly synthesized short ssDNA to perform the RNA-dependent minus-strand DNA synthesis of the whole template. RNase H digests the RNA template except for a polypurine tract (PPT) situated at the 5' end of the genome. It is not clear if both polymerase and RNase H activities are simultaneous. RNase H probably can proceed both in a polymerase-dependent (RNA cut into small fragments by the same RT performing DNA synthesis) and a polymerase-independent mode (cleavage of remaining RNA fragments by free RTs). Secondly, RT performs DNA-directed plus-strand DNA synthesis using the PPT that has not been removed by RNase H as primers. PPT and tRNA primers are then removed by RNase H. The 3' and 5' ssDNA PBS regions hybridize to form a circular dsDNA intermediate. Strand displacement synthesis by RT to the PBS and PPT ends produces a blunt ended, linear dsDNA copy of the viral genome that includes long terminal repeats (LTRs) at both ends. Catalyzes viral DNA integration into the host chromosome, by performing a series of DNA cutting and joining reactions. This enzyme activity takes place after virion entry into a cell and reverse transcription of the RNA genome in dsDNA. The first step in the integration process is 3' processing. This step requires a complex comprising the viral genome, matrix protein and integrase. This complex is called the pre-integration complex (PIC). The integrase protein removes 2 nucleotides from each 3' end of the viral DNA, leaving recessed CA OH's at the 3' ends. In the second step that requires cell division, the PIC enters cell nucleus. In the third step, termed strand transfer, the integrase protein joins the previously processed 3' ends to the 5' ends of strands of target cellular DNA at the site of integration. The last step is viral DNA integration into host chromosome. This Papio (baboons) protein is Gag-Pol polyprotein (pol).